The sequence spans 308 residues: MTENRKKLVEVKNVSLTFNKGKANQVKAIDNVSFNIYEGEVFGLVGESGSGKTTIGRAILKLYNIDKGEIDFEGETISKLKGKSLFNFRKKAQMIFQDPQASLNSRMKVRDIIAEGLDVHKLVKNKADRDAKVQDLLDLVGLNKDHLTRYPHEFSGGQRQRIGIARALAVEPKFIIADEPISALDVSIQAQVVNLMQKLQHEQGLTYLFIAHDLSMVKYISDRIGVMHWGKIVEIGTSDEVYHHPIHPYTQSLLSAVPEPDPVLERQRIHKVYDPVDELDGQEREMREITPGHFVLATEEEAKAYKKK.

Positions 9 to 254 (VEVKNVSLTF…PIHPYTQSLL (246 aa)) constitute an ABC transporter domain. 46–53 (GESGSGKT) is an ATP binding site.

This sequence belongs to the ABC transporter superfamily. In terms of assembly, the complex is composed of two ATP-binding proteins (OppD and OppF), two transmembrane proteins (OppB and OppC) and a solute-binding protein (OppA).

The protein resides in the cell membrane. It carries out the reaction a [peptide](out) + ATP + H2O = a [peptide](in) + ADP + phosphate + H(+). Part of the ABC transporter complex OppABCDF involved in the uptake of oligopeptides. Probably responsible for energy coupling to the transport system. The sequence is that of Oligopeptide transport ATP-binding protein OppF (oppF) from Streptococcus mutans serotype c (strain ATCC 700610 / UA159).